A 109-amino-acid polypeptide reads, in one-letter code: Protein reprimo (109 aa).

N-linked (GlcNAc...) asparagine glycosylation is found at Asn-7 and Asn-18. Residues 56–76 form a helical membrane-spanning segment; it reads VVQIAVMCVLSLTVVFGIFFL. Residue Ser-98 is modified to Phosphoserine.

Belongs to the reprimo family.

The protein localises to the cytoplasm. The protein resides in the membrane. Its function is as follows. May be involved in the regulation of p53-dependent G2 arrest of the cell cycle. Seems to induce cell cycle arrest by inhibiting CDK1 activity and nuclear translocation of the CDC2 cyclin B1 complex. This chain is Protein reprimo (RPRM), found in Bos taurus (Bovine).